The primary structure comprises 435 residues: Serine--tRNA ligase (435 aa).

An L-serine-binding site is contributed by 242 to 244 (TAE). Position 273-275 (273-275 (RSE)) interacts with ATP. E296 serves as a coordination point for L-serine. ATP is bound at residue 360–363 (EISS). S396 is an L-serine binding site.

Belongs to the class-II aminoacyl-tRNA synthetase family. Type-1 seryl-tRNA synthetase subfamily. Homodimer. The tRNA molecule binds across the dimer.

Its subcellular location is the cytoplasm. The catalysed reaction is tRNA(Ser) + L-serine + ATP = L-seryl-tRNA(Ser) + AMP + diphosphate + H(+). It catalyses the reaction tRNA(Sec) + L-serine + ATP = L-seryl-tRNA(Sec) + AMP + diphosphate + H(+). It participates in aminoacyl-tRNA biosynthesis; selenocysteinyl-tRNA(Sec) biosynthesis; L-seryl-tRNA(Sec) from L-serine and tRNA(Sec): step 1/1. Functionally, catalyzes the attachment of serine to tRNA(Ser). Is also able to aminoacylate tRNA(Sec) with serine, to form the misacylated tRNA L-seryl-tRNA(Sec), which will be further converted into selenocysteinyl-tRNA(Sec). This is Serine--tRNA ligase from Aliivibrio salmonicida (strain LFI1238) (Vibrio salmonicida (strain LFI1238)).